Reading from the N-terminus, the 141-residue chain is Hemoglobin subunit alpha-2 (141 aa).

In terms of domain architecture, Globin spans 1–141 (VLSSQDKANV…VKHVLTSKYR (141 aa)). His58 is an O2 binding site. His87 serves as a coordination point for heme b.

This sequence belongs to the globin family. Minor hemoglobin is a heterotetramer of two alpha-2 chains and two beta-2 chains. As to expression, red blood cells.

Functionally, involved in oxygen transport from the lung to the various peripheral tissues. This chain is Hemoglobin subunit alpha-2, found in Triturus cristatus (Great crested newt).